The primary structure comprises 140 residues: MERKVDHFQMTYQSFKDLSIKAKLSYTFNWFGDYSSGGFTAKKGDKHYFDLFLKIKPDPNKSFKAANFKTEEKNSTAIDGQETTRNLEWIEFGASISWSLKGKDDASEKSVKQFLDSYANNTSGYSSDINLFSYLEYLIR.

Belongs to the MG439/MG440 family.

This is an uncharacterized protein from Mycoplasma pneumoniae (strain ATCC 29342 / M129 / Subtype 1) (Mycoplasmoides pneumoniae).